A 247-amino-acid chain; its full sequence is uncharacterized protein (247 aa).

The N-acetyltransferase domain occupies 70-205; the sequence is ISLWMGPGNN…QKVPLEIMIR (136 aa).

This sequence belongs to the acetyltransferase family.

The protein resides in the endoplasmic reticulum. Its subcellular location is the golgi apparatus. The protein localises to the vacuole. This is an uncharacterized protein from Schizosaccharomyces pombe (strain 972 / ATCC 24843) (Fission yeast).